The sequence spans 244 residues: Thaumatin-like protein 1 (244 aa).

An N-terminal signal peptide occupies residues 1–22; the sequence is MKFEALIGLVLVFLSEHAGVYS. 8 disulfides stabilise this stretch: Cys31/Cys243, Cys79/Cys89, Cys94/Cys101, Cys149/Cys232, Cys154/Cys215, Cys162/Cys178, Cys182/Cys191, and Cys192/Cys202. N-linked (GlcNAc...) asparagine glycosylation is present at Asn150.

The protein belongs to the thaumatin family. Post-translationally, N-glycosylated. In terms of tissue distribution, style.

The protein localises to the secreted. The protein is Thaumatin-like protein 1 (TL1) of Pyrus pyrifolia (Chinese pear).